The sequence spans 1270 residues: Microtubule-associated tumor suppressor 1 (1270 aa).

Residues 1–14 are compositionally biased toward acidic residues; the sequence is MTDDNSDDKIEDEL. Disordered stretches follow at residues 1–50 and 184–236; these read MTDD…NSAN and FHTA…VTPS. Positions 38-50 are enriched in low complexity; it reads NSSASSVNWNSAN. The residue at position 186 (threonine 186) is a Phosphothreonine. The segment covering 197–211 has biased composition (low complexity); that stretch reads SGSTSSLSYSTWTSS. Residues 212 to 228 are compositionally biased toward basic and acidic residues; sequence HSDKTHARETTYDRESF. Phosphoserine occurs at positions 381, 399, and 443. 2 disordered regions span residues 524-560 and 592-622; these read DAAL…PRSD and THSK…SSSN. The segment covering 533–556 has biased composition (polar residues); it reads RPQQTSASSPSSVNSRQQTVLSRT. Phosphoserine is present on serine 629. 3 stretches are compositionally biased toward polar residues: residues 701-710, 759-776, and 797-815; these read SKTTTTSGRN, VSSS…SSWV, and TGST…TYSN. Residues 701 to 815 form a disordered region; that stretch reads SKTTTTSGRN…THSELSTYSN (115 aa). The stretch at 940 to 1231 forms a coiled coil; sequence IQHLLSEREE…RLSMENEELL (292 aa). Residues serine 1203, serine 1224, serine 1245, serine 1255, serine 1259, serine 1261, serine 1264, and serine 1268 each carry the phosphoserine modification. The interval 1237–1270 is disordered; that stretch reads GDLCSPKRSPTSSAIPLQSPRNSGSFPSPSISPR. The segment covering 1244-1270 has biased composition (polar residues); the sequence is RSPTSSAIPLQSPRNSGSFPSPSISPR.

This sequence belongs to the MTUS1 family. As to quaternary structure, homodimer. Interacts with AGTR2. Interacts with PTPN6. Isoform 1 associates with microtubules. In terms of tissue distribution, ubiquitously expressed (at protein level). Highly expressed in brain. Down-regulated in ovarian carcinoma, pancreas carcinoma, colon carcinoma and head and neck squamous cell carcinoma (HNSCC). Isoform 1 is the major isoform in most peripheral tissues. Isoform 2 is abundant in most peripheral tissues. Isoform 3 is the major isoform in brain, female reproductive tissues, thyroid and heart. Within brain it is highly expressed in corpus callosum and pons. Isoform 6 is brain-specific, it is the major isoform in cerebellum and fetal brain.

It is found in the mitochondrion. The protein resides in the golgi apparatus. It localises to the cell membrane. The protein localises to the nucleus. Its subcellular location is the cytoplasm. It is found in the cytoskeleton. The protein resides in the microtubule organizing center. It localises to the centrosome. The protein localises to the spindle. Functionally, cooperates with AGTR2 to inhibit ERK2 activation and cell proliferation. May be required for AGTR2 cell surface expression. Together with PTPN6, induces UBE2V2 expression upon angiotensin-II stimulation. Isoform 1 inhibits breast cancer cell proliferation, delays the progression of mitosis by prolonging metaphase and reduces tumor growth. This is Microtubule-associated tumor suppressor 1 (MTUS1) from Homo sapiens (Human).